We begin with the raw amino-acid sequence, 168 residues long: Crossover junction endodeoxyribonuclease RuvC (168 aa).

Catalysis depends on residues Asp10, Glu70, and Asp143. 3 residues coordinate Mg(2+): Asp10, Glu70, and Asp143.

Belongs to the RuvC family. In terms of assembly, homodimer which binds Holliday junction (HJ) DNA. The HJ becomes 2-fold symmetrical on binding to RuvC with unstacked arms; it has a different conformation from HJ DNA in complex with RuvA. In the full resolvosome a probable DNA-RuvA(4)-RuvB(12)-RuvC(2) complex forms which resolves the HJ. Requires Mg(2+) as cofactor.

The protein resides in the cytoplasm. It catalyses the reaction Endonucleolytic cleavage at a junction such as a reciprocal single-stranded crossover between two homologous DNA duplexes (Holliday junction).. Its function is as follows. The RuvA-RuvB-RuvC complex processes Holliday junction (HJ) DNA during genetic recombination and DNA repair. Endonuclease that resolves HJ intermediates. Cleaves cruciform DNA by making single-stranded nicks across the HJ at symmetrical positions within the homologous arms, yielding a 5'-phosphate and a 3'-hydroxyl group; requires a central core of homology in the junction. The consensus cleavage sequence is 5'-(A/T)TT(C/G)-3'. Cleavage occurs on the 3'-side of the TT dinucleotide at the point of strand exchange. HJ branch migration catalyzed by RuvA-RuvB allows RuvC to scan DNA until it finds its consensus sequence, where it cleaves and resolves the cruciform DNA. This is Crossover junction endodeoxyribonuclease RuvC from Thermotoga maritima (strain ATCC 43589 / DSM 3109 / JCM 10099 / NBRC 100826 / MSB8).